The sequence spans 427 residues: Membrane-bound hydrogenase subunit alpha (427 aa).

Ni(2+) contacts are provided by C68, C71, C374, and C377.

This sequence belongs to the complex I 49 kDa subunit family. The membrane-bound hydrogenase complex is composed of MbhK and MbhL, and may also contain MbhJ. Requires Ni(2+) as cofactor.

It localises to the cell membrane. It carries out the reaction H2 + 2 oxidized [2Fe-2S]-[ferredoxin] = 2 reduced [2Fe-2S]-[ferredoxin] + 2 H(+). Its activity is regulated as follows. Inhibited by 0.1 mM Cu(2+). Alpha subunit of a hydrogen-evolving hydrogenase that utilizes protons both as a substrate for hydrogen production and proton translocation. Acts by coupling the redox reaction via ferredoxin and iron-sulfur (Fe-S) clusters to proton translocation across the membrane thereby conserving the redox energy in a proton gradient. This is Membrane-bound hydrogenase subunit alpha from Pyrococcus furiosus (strain ATCC 43587 / DSM 3638 / JCM 8422 / Vc1).